Here is a 174-residue protein sequence, read N- to C-terminus: Ribosome maturation factor RimM (174 aa).

The PRC barrel domain maps to 97-173 (GNKFYFHEVI…DLPVGLVEMY (77 aa)).

It belongs to the RimM family. As to quaternary structure, binds ribosomal protein uS19.

The protein resides in the cytoplasm. In terms of biological role, an accessory protein needed during the final step in the assembly of 30S ribosomal subunit, possibly for assembly of the head region. Essential for efficient processing of 16S rRNA. May be needed both before and after RbfA during the maturation of 16S rRNA. It has affinity for free ribosomal 30S subunits but not for 70S ribosomes. In Flavobacterium johnsoniae (strain ATCC 17061 / DSM 2064 / JCM 8514 / BCRC 14874 / CCUG 350202 / NBRC 14942 / NCIMB 11054 / UW101) (Cytophaga johnsonae), this protein is Ribosome maturation factor RimM.